The primary structure comprises 370 residues: Phosphate-binding protein PstS 2 (370 aa).

The N-terminal stretch at 1-22 (MKFARSGAAVSLLAAGTLVLTA) is a signal peptide. Residue C23 is the site of N-palmitoyl cysteine attachment. A lipid anchor (S-diacylglycerol cysteine) is attached at C23. Residues 54 to 56 (STA), S84, D102, and 191 to 193 (SGT) contribute to the phosphate site.

Belongs to the PstS family. As to quaternary structure, the complex is composed of two ATP-binding proteins (PstB), two transmembrane proteins (PstC and PstA) and a solute-binding protein (PstS).

The protein localises to the cell membrane. Its function is as follows. Functions in inorganic phosphate uptake, although probably not the main uptake protein under phosphate starvation. Part of the ABC transporter complex PstSACB involved in phosphate import. The protein is Phosphate-binding protein PstS 2 (pstS2) of Mycobacterium tuberculosis (strain ATCC 25618 / H37Rv).